An 88-amino-acid polypeptide reads, in one-letter code: METVLIALLRFYKVAVSPMLGNRCRFYPSCSDYAREAIQYHGAARGTYLAVRRVCRCHPFSAGGIDLVPPPNSDTRARGEADARSHRL.

A disordered region spans residues 68-88 (VPPPNSDTRARGEADARSHRL). Residues 75–88 (TRARGEADARSHRL) are compositionally biased toward basic and acidic residues.

Belongs to the UPF0161 family.

Its subcellular location is the cell inner membrane. Could be involved in insertion of integral membrane proteins into the membrane. The protein is Putative membrane protein insertion efficiency factor of Burkholderia ambifaria (strain MC40-6).